The primary structure comprises 655 residues: p-hydroxybenzoic acid efflux pump subunit AaeB (655 aa).

11 helical membrane passes run 13-33, 38-58, 69-89, 93-113, 121-141, 152-172, 370-390, 407-427, 431-451, 459-479, and 482-502; these read FAVK…HFQL, WAVL…GGEP, LRII…IAMI, LLMI…SSLV, WGLA…EPLL, EIVI…PRSI, LFWL…IAVV, FIYG…VIIP, QSML…GIEV, MGAL…TFHF, and FLDS…VILL.

This sequence belongs to the aromatic acid exporter ArAE (TC 2.A.85) family.

The protein localises to the cell inner membrane. Forms an efflux pump with AaeA. Could function as a metabolic relief valve, allowing to eliminate certain compounds when they accumulate to high levels in the cell. This chain is p-hydroxybenzoic acid efflux pump subunit AaeB, found in Escherichia coli (strain SMS-3-5 / SECEC).